The sequence spans 128 residues: RutC family protein BU371 (128 aa).

Belongs to the RutC family.

The chain is RutC family protein BU371 from Buchnera aphidicola subsp. Acyrthosiphon pisum (strain APS) (Acyrthosiphon pisum symbiotic bacterium).